Reading from the N-terminus, the 213-residue chain is 3-demethoxyubiquinol 3-hydroxylase (213 aa).

Residues glutamate 62, glutamate 92, histidine 95, glutamate 144, glutamate 176, and histidine 179 each contribute to the Fe cation site.

This sequence belongs to the COQ7 family. The cofactor is Fe cation.

The protein resides in the cell membrane. The enzyme catalyses a 5-methoxy-2-methyl-3-(all-trans-polyprenyl)benzene-1,4-diol + AH2 + O2 = a 3-demethylubiquinol + A + H2O. It participates in cofactor biosynthesis; ubiquinone biosynthesis. Catalyzes the hydroxylation of 2-nonaprenyl-3-methyl-6-methoxy-1,4-benzoquinol during ubiquinone biosynthesis. This Legionella pneumophila subsp. pneumophila (strain Philadelphia 1 / ATCC 33152 / DSM 7513) protein is 3-demethoxyubiquinol 3-hydroxylase.